An 84-amino-acid polypeptide reads, in one-letter code: uncharacterized protein (84 aa).

The 2Fe-2S ferredoxin-type domain occupies Ala-2–Met-84. The [2Fe-2S] cluster site is built by Cys-37, Cys-42, Cys-45, and Cys-74.

Requires [2Fe-2S] cluster as cofactor.

This is an uncharacterized protein from Escherichia coli O6:H1 (strain CFT073 / ATCC 700928 / UPEC).